The sequence spans 631 residues: Polyadenylate-binding protein 3 (631 aa).

RRM domains follow at residues 11-89, 99-175, 191-268, and 294-370; these read ASLY…WSQR, GNIF…QFKS, PNVY…RAQK, and VNLY…LAQR. Tyr140 carries the phosphotyrosine modification. Ser315 carries the phosphoserine modification. Lys361 carries the post-translational modification N6,N6-dimethyllysine; alternate. Lys361 participates in a covalent cross-link: Glycyl lysine isopeptide (Lys-Gly) (interchain with G-Cter in SUMO2); alternate. Residue Tyr364 is modified to Phosphotyrosine. Omega-N-methylarginine occurs at positions 426, 430, and 449. Residue Arg501 is modified to Dimethylated arginine. Residue Arg513 is modified to Omega-N-methylarginine. A PABC domain is found at 537 to 614; the sequence is QETLTASRLA…AVAVLQAHQA (78 aa).

It belongs to the polyadenylate-binding protein type-1 family. Testis specific.

Its subcellular location is the cytoplasm. Binds the poly(A) tail of mRNA. May be involved in cytoplasmic regulatory processes of mRNA metabolism. Binds poly(A) with a slightly lower affinity as compared to PABPC1. This Homo sapiens (Human) protein is Polyadenylate-binding protein 3 (PABPC3).